A 391-amino-acid polypeptide reads, in one-letter code: Phosphoglycerate kinase (391 aa).

Substrate contacts are provided by residues 21–23 (DLN), Arg-36, 59–62 (HLGR), Arg-113, and Arg-146. ATP is bound by residues Lys-197, Glu-319, and 345-348 (GGDT).

This sequence belongs to the phosphoglycerate kinase family. As to quaternary structure, monomer.

It is found in the cytoplasm. The enzyme catalyses (2R)-3-phosphoglycerate + ATP = (2R)-3-phospho-glyceroyl phosphate + ADP. Its pathway is carbohydrate degradation; glycolysis; pyruvate from D-glyceraldehyde 3-phosphate: step 2/5. This is Phosphoglycerate kinase from Shewanella sp. (strain W3-18-1).